Consider the following 416-residue polypeptide: Gamma-glutamyl phosphate reductase (416 aa).

It belongs to the gamma-glutamyl phosphate reductase family.

It is found in the cytoplasm. The catalysed reaction is L-glutamate 5-semialdehyde + phosphate + NADP(+) = L-glutamyl 5-phosphate + NADPH + H(+). The protein operates within amino-acid biosynthesis; L-proline biosynthesis; L-glutamate 5-semialdehyde from L-glutamate: step 2/2. Functionally, catalyzes the NADPH-dependent reduction of L-glutamate 5-phosphate into L-glutamate 5-semialdehyde and phosphate. The product spontaneously undergoes cyclization to form 1-pyrroline-5-carboxylate. This is Gamma-glutamyl phosphate reductase from Streptococcus pyogenes serotype M6 (strain ATCC BAA-946 / MGAS10394).